Here is a 122-residue protein sequence, read N- to C-terminus: MIQQESRLKVADNTGAKEILCIRVLGGSSRRYAGIGDVIVATVKDAIPGGNVKRGDVVKAVVVRTVKERRRADGSYIKFDENAAVIIKNDNDPRGTRIFGPVGRELREKKFMKIVSLAPEVL.

It belongs to the universal ribosomal protein uL14 family. In terms of assembly, part of the 50S ribosomal subunit. Forms a cluster with proteins L3 and L19. In the 70S ribosome, L14 and L19 interact and together make contacts with the 16S rRNA in bridges B5 and B8.

Its function is as follows. Binds to 23S rRNA. Forms part of two intersubunit bridges in the 70S ribosome. This chain is Large ribosomal subunit protein uL14, found in Mycolicibacterium smegmatis (strain ATCC 700084 / mc(2)155) (Mycobacterium smegmatis).